The primary structure comprises 1266 residues: Rho GTPase-activating protein 29 (1266 aa).

Phosphoserine is present on residues Ser-166, Ser-171, Ser-174, and Ser-185. The 271-residue stretch at 187-457 (IELDNLLLKN…SAKLYDPGQE (271 aa)) folds into the F-BAR domain. Residues 291-413 (RKNEMEKQRK…EILTQLRTLV (123 aa)) adopt a coiled-coil conformation. Residues Ser-496, Ser-516, and Ser-549 each carry the phosphoserine modification. The span at 538 to 556 (SESTGGSSESRSLDSESIS) shows a compositional bias: low complexity. The interval 538 to 596 (SESTGGSSESRSLDSESISPGDFHRKLPRTPSSGTMSSADDLDEREPPSPSEAGPNSLG) is disordered. The Phorbol-ester/DAG-type zinc-finger motif lies at 609–654 (THKFRKLRSPTKCRDCEGIVMFPGVECEECLLVCHRKCLENLVIVC). Residues 668-883 (AEFIQVAKKE…FLITYAQKIF (216 aa)) form the Rho-GAP domain. Phosphoserine occurs at positions 915, 951, and 1023. Disordered stretches follow at residues 1033–1054 (AGSP…KFGK), 1114–1153 (VSTG…DSCP), and 1222–1248 (VQTS…QRPR). Over residues 1115 to 1127 (STGNNRGHSSGAA) the composition is skewed to polar residues. Residues 1132–1148 (AHADPARSARDTSEHSS) show a composition bias toward basic and acidic residues. Phosphoserine occurs at positions 1149 and 1151. The segment at 1263–1266 (PQFV) is interaction with PTPN13/PTPL1.

In terms of assembly, interacts with PTPN13/PTPL1. Interacts with RAP2A via its coiled coil domain. Interacts with RASIP1.

In terms of biological role, GTPase activator for the Rho-type GTPases by converting them to an inactive GDP-bound state. Has strong activity toward RHOA, and weaker activity toward RAC1 and CDC42. May act as a specific effector of RAP2A to regulate Rho. In concert with RASIP1, suppresses RhoA signaling and dampens ROCK and MYH9 activities in endothelial cells and plays an essential role in blood vessel tubulogenesis. The sequence is that of Rho GTPase-activating protein 29 (Arhgap29) from Rattus norvegicus (Rat).